The primary structure comprises 122 residues: Large ribosomal subunit protein uL14 (122 aa).

The protein belongs to the universal ribosomal protein uL14 family. In terms of assembly, part of the 50S ribosomal subunit. Forms a cluster with proteins L3 and L19. In the 70S ribosome, L14 and L19 interact and together make contacts with the 16S rRNA in bridges B5 and B8.

Binds to 23S rRNA. Forms part of two intersubunit bridges in the 70S ribosome. The protein is Large ribosomal subunit protein uL14 of Delftia acidovorans (strain DSM 14801 / SPH-1).